The primary structure comprises 549 residues: Probable protein kinase UbiB (549 aa).

A Protein kinase domain is found at 123-501 (DFDETPLASA…QQQAHKSNYM (379 aa)). ATP is bound by residues 129-137 (LASASISQV) and Lys152. Asp287 functions as the Proton acceptor in the catalytic mechanism. 2 consecutive transmembrane segments (helical) span residues 499 to 516 (NYML…TLLF) and 521 to 540 (TLWS…FIGW).

It belongs to the ABC1 family. UbiB subfamily.

It is found in the cell inner membrane. Its pathway is cofactor biosynthesis; ubiquinone biosynthesis [regulation]. In terms of biological role, is probably a protein kinase regulator of UbiI activity which is involved in aerobic coenzyme Q (ubiquinone) biosynthesis. The polypeptide is Probable protein kinase UbiB (Shewanella sp. (strain W3-18-1)).